The chain runs to 422 residues: Histidine--tRNA ligase (422 aa).

It belongs to the class-II aminoacyl-tRNA synthetase family. As to quaternary structure, homodimer.

It is found in the cytoplasm. It catalyses the reaction tRNA(His) + L-histidine + ATP = L-histidyl-tRNA(His) + AMP + diphosphate + H(+). This is Histidine--tRNA ligase from Vibrio campbellii (strain ATCC BAA-1116).